Consider the following 541-residue polypeptide: Phosphoenolpyruvate carboxykinase (ATP) (541 aa).

Substrate contacts are provided by Arg-67, Tyr-207, and Lys-213. ATP-binding positions include Lys-213, His-232, and 248 to 256; that span reads GLSGTGKTT. Mn(2+) contacts are provided by Lys-213 and His-232. Residue Asp-269 participates in Mn(2+) binding. ATP-binding positions include Glu-297, Arg-333, 449–450, and Thr-455; that span reads RI. Residue Arg-333 coordinates substrate.

The protein belongs to the phosphoenolpyruvate carboxykinase (ATP) family. In terms of assembly, monomer. It depends on Mn(2+) as a cofactor.

It localises to the cytoplasm. The catalysed reaction is oxaloacetate + ATP = phosphoenolpyruvate + ADP + CO2. It participates in carbohydrate biosynthesis; gluconeogenesis. Its function is as follows. Involved in the gluconeogenesis. Catalyzes the conversion of oxaloacetate (OAA) to phosphoenolpyruvate (PEP) through direct phosphoryl transfer between the nucleoside triphosphate and OAA. This Vibrio atlanticus (strain LGP32) (Vibrio splendidus (strain Mel32)) protein is Phosphoenolpyruvate carboxykinase (ATP).